We begin with the raw amino-acid sequence, 221 residues long: Protein DEHYDRATION-INDUCED 19 homolog 2 (221 aa).

2 disordered regions span residues 1–24 and 162–193; these read MEDD…TAAK and VLPD…SDSD.

Belongs to the Di19 family. Not phosphorylated in vitro by CPK3 or CPK11. In terms of tissue distribution, expressed in seedlings, roots, leaves, stems, flowers and siliques.

Its subcellular location is the cytoplasm. It localises to the nucleus. The chain is Protein DEHYDRATION-INDUCED 19 homolog 2 (DI19-2) from Arabidopsis thaliana (Mouse-ear cress).